Consider the following 341-residue polypeptide: Glyceraldehyde-3-phosphate dehydrogenase 2 (341 aa).

NAD(+) contacts are provided by residues 12 to 13, arginine 78, and threonine 120; that span reads RI. Residues 152–154 and threonine 183 each bind D-glyceraldehyde 3-phosphate; that span reads SCT. Catalysis depends on cysteine 153, which acts as the Nucleophile. Asparagine 184 is an NAD(+) binding site. D-glyceraldehyde 3-phosphate is bound by residues arginine 198, 211 to 212, and arginine 234; that span reads TG. NAD(+) is bound at residue asparagine 313.

This sequence belongs to the glyceraldehyde-3-phosphate dehydrogenase family. As to quaternary structure, homotetramer.

The protein localises to the cytoplasm. The enzyme catalyses D-glyceraldehyde 3-phosphate + phosphate + NAD(+) = (2R)-3-phospho-glyceroyl phosphate + NADH + H(+). The protein operates within carbohydrate degradation; glycolysis; pyruvate from D-glyceraldehyde 3-phosphate: step 1/5. In terms of biological role, catalyzes the oxidative phosphorylation of glyceraldehyde 3-phosphate (G3P) to 1,3-bisphosphoglycerate (BPG) using the cofactor NAD. The first reaction step involves the formation of a hemiacetal intermediate between G3P and a cysteine residue, and this hemiacetal intermediate is then oxidized to a thioester, with concomitant reduction of NAD to NADH. The reduced NADH is then exchanged with the second NAD, and the thioester is attacked by a nucleophilic inorganic phosphate to produce BPG. The polypeptide is Glyceraldehyde-3-phosphate dehydrogenase 2 (gapA2) (Staphylococcus epidermidis (strain ATCC 12228 / FDA PCI 1200)).